Here is a 130-residue protein sequence, read N- to C-terminus: Small ribosomal subunit protein uS8 (130 aa).

Belongs to the universal ribosomal protein uS8 family. Part of the 30S ribosomal subunit. Contacts proteins S5 and S12.

In terms of biological role, one of the primary rRNA binding proteins, it binds directly to 16S rRNA central domain where it helps coordinate assembly of the platform of the 30S subunit. The chain is Small ribosomal subunit protein uS8 from Mannheimia succiniciproducens (strain KCTC 0769BP / MBEL55E).